A 361-amino-acid polypeptide reads, in one-letter code: C3a anaphylatoxin chemotactic receptor (361 aa).

The Extracellular portion of the chain corresponds to Met-1 to Ser-64. N-linked (GlcNAc...) asparagine glycans are attached at residues Asn-36 and Asn-50. Residues Leu-65–Ile-85 traverse the membrane as a helical segment. Over Ala-86–Thr-96 the chain is Cytoplasmic. Residues Ile-97–Val-117 traverse the membrane as a helical segment. At Ala-118–Lys-134 the chain is on the extracellular side. Cysteines 133 and 210 form a disulfide. A helical membrane pass occupies residues Ile-135–Ser-155. Over Leu-156–Ala-177 the chain is Cytoplasmic. A helical transmembrane segment spans residues Arg-178–Leu-198. The Extracellular portion of the chain corresponds to Arg-199–Ser-224. Residues Ile-225–Ile-245 form a helical membrane-spanning segment. Over Ile-246 to Arg-262 the chain is Cytoplasmic. The chain crosses the membrane as a helical span at residues Ile-263–Leu-283. Residues Ile-284–Pro-301 are Extracellular-facing. Residues Leu-302–Gly-322 traverse the membrane as a helical segment. Topologically, residues Gln-323–Leu-361 are cytoplasmic.

It belongs to the G-protein coupled receptor 1 family.

It is found in the cell membrane. Functionally, receptor for the chemotactic and inflammatory peptide anaphylatoxin C3a. This receptor stimulates chemotaxis, granule enzyme release and superoxide anion production. The chain is C3a anaphylatoxin chemotactic receptor (c3ar1) from Danio rerio (Zebrafish).